The following is a 584-amino-acid chain: Probable terpene synthase 9 (584 aa).

Mg(2+) is bound by residues aspartate 339, aspartate 343, and glutamate 491. A DDXXD motif motif is present at residues 339 to 343; sequence DDMYD.

Belongs to the terpene synthase family. Mg(2+) is required as a cofactor.

Probable sesquiterpene synthase. The polypeptide is Probable terpene synthase 9 (TPS9) (Ricinus communis (Castor bean)).